Here is a 171-residue protein sequence, read N- to C-terminus: MALGSNTKFYETPNHPFQGERIADEANLIGRYGLKNKEELWRAQSELRGYRREARKLLGSAGEHETESEEFLARLKRYGILNEQDQLDDVLSLDVTDVLERRLQTVVYRKGYANTPEQARQFIVHGHIVLDDARVTRPGMTVETAVESSVGFDEHSSLSDELHPERAEAQE.

The 65-residue stretch at 101 to 165 folds into the S4 RNA-binding domain; sequence RRLQTVVYRK…SSLSDELHPE (65 aa). The disordered stretch occupies residues 148-171; sequence SSVGFDEHSSLSDELHPERAEAQE. Residues 152–171 are compositionally biased toward basic and acidic residues; the sequence is FDEHSSLSDELHPERAEAQE.

This sequence belongs to the universal ribosomal protein uS4 family. In terms of assembly, part of the 30S ribosomal subunit. Contacts protein S5. The interaction surface between S4 and S5 is involved in control of translational fidelity.

Its function is as follows. One of the primary rRNA binding proteins, it binds directly to 16S rRNA where it nucleates assembly of the body of the 30S subunit. Functionally, with S5 and S12 plays an important role in translational accuracy. This Haloarcula marismortui (strain ATCC 43049 / DSM 3752 / JCM 8966 / VKM B-1809) (Halobacterium marismortui) protein is Small ribosomal subunit protein uS4.